Consider the following 133-residue polypeptide: UPF0102 protein Fnod_1509 (133 aa).

It belongs to the UPF0102 family.

The protein is UPF0102 protein Fnod_1509 of Fervidobacterium nodosum (strain ATCC 35602 / DSM 5306 / Rt17-B1).